The sequence spans 59 residues: Large ribosomal subunit protein uL30 (59 aa).

The protein belongs to the universal ribosomal protein uL30 family. Part of the 50S ribosomal subunit.

The protein is Large ribosomal subunit protein uL30 of Leptospira borgpetersenii serovar Hardjo-bovis (strain JB197).